Reading from the N-terminus, the 309-residue chain is tRNA dimethylallyltransferase (309 aa).

Residue G10–T17 coordinates ATP. T12–T17 is a binding site for substrate. An interaction with substrate tRNA region spans residues D35–Q38.

It belongs to the IPP transferase family. Monomer. It depends on Mg(2+) as a cofactor.

It catalyses the reaction adenosine(37) in tRNA + dimethylallyl diphosphate = N(6)-dimethylallyladenosine(37) in tRNA + diphosphate. Catalyzes the transfer of a dimethylallyl group onto the adenine at position 37 in tRNAs that read codons beginning with uridine, leading to the formation of N6-(dimethylallyl)adenosine (i(6)A). In Clostridium beijerinckii (strain ATCC 51743 / NCIMB 8052) (Clostridium acetobutylicum), this protein is tRNA dimethylallyltransferase.